The chain runs to 459 residues: Glutamate--isopropylamine ligase (459 aa).

In terms of domain architecture, GS beta-grasp spans 19–115 (HNIDTIRLGA…VLCDIQHLNG (97 aa)). A GS catalytic domain is found at 122-459 (PRNLLRKAIE…WELARYLDII (338 aa)).

The protein belongs to the glutamine synthetase family.

The catalysed reaction is isopropylamine + L-glutamate + ATP = gamma-L-glutamyl-isopropylamide + ADP + phosphate + H(+). Its function is as follows. Involved in the degradation of isopropylamine, which is a constituent of the herbicides atrazine. Catalyzes the ATP-dependent formation of gamma-glutamyl-isopropylamide from isopropylamine and L-glutamate. It can also use aminoalkanes, amino-alcohols (L-alaninol and D-alaninol) and amino-esters as substrates. The polypeptide is Glutamate--isopropylamine ligase (ipuC) (Pseudomonas sp).